The following is a 522-amino-acid chain: Subtilisin-like protease 10 (522 aa).

A signal peptide spans 1-19; sequence MFFFKGVVAVLSFFSAVNA. A propeptide spanning residues 20-117 is cleaved from the precursor; it reads APFMKPNNGT…VERDQIGTSQ (98 aa). The region spanning 36-113 is the Inhibitor I9 domain; the sequence is SYIVLLKRDI…HVAHVERDQI (78 aa). Positions 127-405 constitute a Peptidase S8 domain; the sequence is NWGLGRLSNS…KLLVNGANGT (279 aa). Active-site charge relay system residues include Asp159 and His190. N-linked (GlcNAc...) asparagine glycosylation occurs at Asn251. The active-site Charge relay system is the Ser348. Residues 383–397 are compositionally biased toward polar residues; the sequence is SASVKNPGPNTTNKL. The segment at 383-515 is disordered; that stretch reads SASVKNPGPN…GWNRPMWWNR (133 aa). 2 N-linked (GlcNAc...) asparagine glycosylation sites follow: Asn392 and Asn403. The span at 432–459 shows a compositional bias: pro residues; sequence SQNPPPGQNPPPGQNPPPEQPAPSPPAN.

It belongs to the peptidase S8 family.

It localises to the secreted. Its function is as follows. Secreted subtilisin-like serine protease with keratinolytic activity that contributes to pathogenicity. In Trichophyton verrucosum (strain HKI 0517), this protein is Subtilisin-like protease 10 (SUB10).